The following is a 551-amino-acid chain: Dol-P-Man:Man(7)GlcNAc(2)-PP-Dol alpha-1,6-mannosyltransferase (551 aa).

Topologically, residues 1–2 (MR) are lumenal. Residues 3–23 (WSVLDTVLLTVISFHLIQAPF) traverse the membrane as a helical segment. Topologically, residues 24-61 (TKVEESFNIQAIHDILTYSVFDISQYDHLKFPGVVPRT) are cytoplasmic. Residues 62–82 (FVGAVIIAMLSRPYLYLSSLI) form a helical membrane-spanning segment. The Lumenal segment spans residues 83–89 (QTSRPTS). Residues 90-110 (IDVQLVVRGIVGLTNGLSFIY) form a helical membrane-spanning segment. The Cytoplasmic portion of the chain corresponds to 111–136 (LKNCLQDMFDEITEKKKEENEDKDIY). A helical transmembrane segment spans residues 137-157 (IYDSAGTWFLLFLIGSFHLMF). At 158 to 178 (YSTRTLPNFVMTLPLTNVALG) the chain is on the lumenal side. The chain crosses the membrane as a helical span at residues 179-199 (WVLLGRYNAAIFLSALVAIVF). The Cytoplasmic segment spans residues 200-202 (RLE). Residues 203-223 (VSALSAGIALFSVIFKKISLF) traverse the membrane as a helical segment. Residues 224-227 (DAIK) lie on the Lumenal side of the membrane. A helical transmembrane segment spans residues 228-248 (FGIFGLGLGSAISITVDSYFW). At 249-275 (QEWCLPEVDGFLFNVVAGYASKWGVEP) the chain is on the cytoplasmic side. Residues 276 to 296 (VTAYFTHYLRMMFMPPTVLLL) form a helical membrane-spanning segment. At 297–303 (NYFGYKL) the chain is on the lumenal side. Residues 304-324 (APAKLKIVSLASLFHIIVLSF) traverse the membrane as a helical segment. Over 325–331 (QPHKEWR) the chain is Cytoplasmic. Residues 332–352 (FIIYAVPSIMLLGATGAAHLW) traverse the membrane as a helical segment. Over 353 to 365 (ENMKVKKITNVLC) the chain is Lumenal. The chain crosses the membrane as a helical span at residues 366-386 (LAILPLSIMTSFFISMAFLYI). Residues 387 to 417 (SRMNYPGGEALTSFNDMIVEKNITNATVHIS) are Cytoplasmic-facing. A helical membrane pass occupies residues 418 to 438 (IPPCMTGVTLFGELNYGVYGI). Residues 439-551 (NYDKTENTTL…KRIKQDEKTD (113 aa)) lie on the Lumenal side of the membrane.

Belongs to the glycosyltransferase 22 family.

The protein localises to the endoplasmic reticulum membrane. It catalyses the reaction an alpha-D-Man-(1-&gt;2)-alpha-D-Man-(1-&gt;2)-alpha-D-Man-(1-&gt;3)-[alpha-D-Man-(1-&gt;2)-alpha-D-Man-(1-&gt;3)-alpha-D-Man-(1-&gt;6)]-beta-D-Man-(1-&gt;4)-beta-D-GlcNAc-(1-&gt;4)-alpha-D-GlcNAc-diphospho-di-trans,poly-cis-dolichol + a di-trans,poly-cis-dolichyl beta-D-mannosyl phosphate = an alpha-D-Man-(1-&gt;2)-alpha-D-Man-(1-&gt;2)-alpha-D-Man-(1-&gt;3)-[alpha-D-Man-(1-&gt;2)-alpha-D-Man-(1-&gt;3)-[alpha-D-Man-(1-&gt;6)]-alpha-D-Man-(1-&gt;6)]-beta-D-Man-(1-&gt;4)-beta-D-GlcNAc-(1-&gt;4)-alpha-D-GlcNAc-diphospho-di-trans,poly-cis-dolichol + a di-trans,poly-cis-dolichyl phosphate + H(+). Its pathway is protein modification; protein glycosylation. Its function is as follows. Mannosyltransferase that operates in the biosynthetic pathway of dolichol-linked oligosaccharides, the glycan precursors employed in protein asparagine (N)-glycosylation. The assembly of dolichol-linked oligosaccharides begins on the cytosolic side of the endoplasmic reticulum membrane and finishes in its lumen. The sequential addition of sugars to dolichol pyrophosphate produces dolichol-linked oligosaccharides containing fourteen sugars, including two GlcNAcs, nine mannoses and three glucoses. Once assembled, the oligosaccharide is transferred from the lipid to nascent proteins by oligosaccharyltransferases. In the lumen of the endoplasmic reticulum, adds the eighth mannose residue in an alpha-1,6 linkage onto Man(7)GlcNAc(2)-PP-dolichol to produce Man(8)GlcNAc(2)-PP-dolichol. This chain is Dol-P-Man:Man(7)GlcNAc(2)-PP-Dol alpha-1,6-mannosyltransferase (ALG12), found in Saccharomyces cerevisiae (strain ATCC 204508 / S288c) (Baker's yeast).